The following is a 713-amino-acid chain: B3 domain-containing transcription factor VAL3 (713 aa).

A DNA-binding region (TF-B3) is located at residues 328–427 (FEKILSATDT…KLILGFRKAS (100 aa)). 2 disordered regions span residues 459-478 (VECS…SKRQ) and 616-713 (LNSD…TSSM). Basic residues predominate over residues 464–477 (GKKKSSMMITRSKR). Residues 616–629 (LNSDNGLHQSANNS) are compositionally biased toward polar residues. Basic and acidic residues predominate over residues 663 to 674 (TKSETLPHDDTV). The segment covering 676–688 (SSFTSPSSSSAHS) has biased composition (low complexity). The span at 690–700 (NNKEDEGKLKT) shows a compositional bias: basic and acidic residues. A compositionally biased stretch (low complexity) spans 701–713 (TTEIADTTTTSSM).

Its subcellular location is the nucleus. Functionally, may be involved in plant development. The chain is B3 domain-containing transcription factor VAL3 (VAL3) from Arabidopsis thaliana (Mouse-ear cress).